The chain runs to 587 residues: Aspartate--tRNA ligase (587 aa).

L-aspartate is bound at residue Glu173. The tract at residues Gln197 to Lys200 is aspartate. Arg219 lines the L-aspartate pocket. ATP is bound by residues Arg219 to Glu221 and Gln228. His446 serves as a coordination point for L-aspartate. Position 480 (Glu480) interacts with ATP. Arg487 serves as a coordination point for L-aspartate. Position 532 to 535 (Gly532 to Arg535) interacts with ATP.

Belongs to the class-II aminoacyl-tRNA synthetase family. Type 1 subfamily. In terms of assembly, homodimer.

It is found in the cytoplasm. The catalysed reaction is tRNA(Asp) + L-aspartate + ATP = L-aspartyl-tRNA(Asp) + AMP + diphosphate. Catalyzes the attachment of L-aspartate to tRNA(Asp) in a two-step reaction: L-aspartate is first activated by ATP to form Asp-AMP and then transferred to the acceptor end of tRNA(Asp). The chain is Aspartate--tRNA ligase from Phocaeicola vulgatus (strain ATCC 8482 / DSM 1447 / JCM 5826 / CCUG 4940 / NBRC 14291 / NCTC 11154) (Bacteroides vulgatus).